A 753-amino-acid chain; its full sequence is Nuclear hormone receptor family member daf-12 (753 aa).

The interval 1-109 (MGTNGGVIAE…PDDGLLDSSE (109 aa)) is disordered. Basic and acidic residues predominate over residues 20–29 (NPDKVEEPVV). Residues 30–44 (RRKRVTRRRHRRIHS) are compositionally biased toward basic residues. The segment at residues 115-190 (QKTCRVCGDH…VGMKKEWILN (76 aa)) is a DNA-binding region (nuclear receptor). NR C4-type zinc fingers lie at residues 118–138 (CRVCGDHATGYNFNVITCESC) and 154–173 (CPYSEDCEINSVSRRFCQKC). The Nuclear localization signal signature appears at 191–206 (EEQLRRRKNSRLNNTG). 3 disordered regions span residues 198–251 (KNSR…TINP), 266–314 (NAMP…GYDP), and 376–410 (GHPMPAETTPPYSAPMSDMSLSRHNSTSSGTEKNH). Over residues 201-211 (RLNNTGTCNKR) the composition is skewed to polar residues. Residues 212-227 (SQPGNQQSPQGPNQQP) are compositionally biased toward low complexity. 2 stretches are compositionally biased toward polar residues: residues 285–301 (PVGSSASDSPPNRSLTM) and 394–410 (MSLSRHNSTSSGTEKNH). Residues 516–753 (AELKALDAVR…ELPGEFFKIK (238 aa)) enclose the NR LBD domain.

The protein belongs to the nuclear hormone receptor family. In terms of assembly, interacts with din-1 isoform d. In terms of tissue distribution, expressed throughout muscles of the pharynx. Expressed in epidermal seam cells, the vulva, head neurons, mature spermatheca, uterus and intestine.

It localises to the nucleus. Nuclear receptor which binds directly to response elements in target gene promoters. Activity is modulated by binding of steroid hormone ligands that include dafachronic acids. Regulates expression of genes involved in postembryonic development and the dauer diapause, in response to environmental cues. Inhibits the expression of let-7 family members when bound to corepressor din-1s which is an isoform of din-1. Plays a role in controlling the timing of seam cell development during the larval stages. Has a role in the immune response to bacterial infection, via regulation of let-7 miRNAs. Controls expression of genes that promote the aerobic catabolism of fatty acids for reproductive growth. May be involved in thermotolerance. In Caenorhabditis elegans, this protein is Nuclear hormone receptor family member daf-12.